We begin with the raw amino-acid sequence, 292 residues long: Chronophin (292 aa).

The active-site Nucleophile is the D25. Mg(2+) is bound by residues D25 and D27. D27 (proton donor) is an active-site residue. Residues 58–60, H178, and K209 each bind substrate; that span reads SNN. Mg(2+) is bound at residue D234.

It belongs to the HAD-like hydrolase superfamily. As to quaternary structure, homodimer. Requires Mg(2+) as cofactor. Ubiquitous. highly expressed in brain (at protein level).

The protein localises to the cytoplasm. It is found in the cytosol. The protein resides in the cytoskeleton. It localises to the cell projection. Its subcellular location is the ruffle membrane. The protein localises to the lamellipodium membrane. It is found in the cell membrane. It carries out the reaction pyridoxal 5'-phosphate + H2O = pyridoxal + phosphate. The catalysed reaction is pyridoxine 5'-phosphate + H2O = pyridoxine + phosphate. It catalyses the reaction pyridoxamine + phosphate = pyridoxamine 5'-phosphate + H2O. The enzyme catalyses O-phospho-L-seryl-[protein] + H2O = L-seryl-[protein] + phosphate. With respect to regulation, inhibited by beryllium trifluoride. Its function is as follows. Functions as a pyridoxal phosphate (PLP) phosphatase, which also catalyzes the dephosphorylation of pyridoxine 5'-phosphate (PNP) and pyridoxamine 5'-phosphate (PMP), with order of substrate preference PLP &gt; PNP &gt; PMP and therefore plays a role in vitamin B6 metabolism. Also functions as a protein serine phosphatase that specifically dephosphorylates 'Ser-3' in proteins of the actin-depolymerizing factor (ADF)/cofilin family like CFL1 and DSTN. Thereby, regulates cofilin-dependent actin cytoskeleton reorganization, being required for normal progress through mitosis and normal cytokinesis. Does not dephosphorylate phosphothreonines in LIMK1. Does not dephosphorylate peptides containing phosphotyrosine. This chain is Chronophin, found in Mus musculus (Mouse).